Here is a 498-residue protein sequence, read N- to C-terminus: Flagellin (498 aa).

It belongs to the bacterial flagellin family.

The protein localises to the secreted. It is found in the bacterial flagellum. Its function is as follows. Flagellin is the subunit protein which polymerizes to form the filaments of bacterial flagella. The chain is Flagellin (fliC) from Escherichia coli (strain K12).